Here is a 313-residue protein sequence, read N- to C-terminus: Small ribosomal subunit biogenesis GTPase RsgA (313 aa).

In terms of domain architecture, CP-type G spans 80–237; it reads KVALRQVIVS…LIDTPGIKEF (158 aa). GTP contacts are provided by residues 129–132 and 180–188; these read NKVD and GQSGVGKSS. 4 residues coordinate Zn(2+): Cys-261, Cys-266, His-268, and Cys-274.

The protein belongs to the TRAFAC class YlqF/YawG GTPase family. RsgA subfamily. Monomer. Associates with 30S ribosomal subunit, binds 16S rRNA. Zn(2+) is required as a cofactor.

Its subcellular location is the cytoplasm. Functionally, one of several proteins that assist in the late maturation steps of the functional core of the 30S ribosomal subunit. Helps release RbfA from mature subunits. May play a role in the assembly of ribosomal proteins into the subunit. Circularly permuted GTPase that catalyzes slow GTP hydrolysis, GTPase activity is stimulated by the 30S ribosomal subunit. The sequence is that of Small ribosomal subunit biogenesis GTPase RsgA from Borrelia recurrentis (strain A1).